A 282-amino-acid polypeptide reads, in one-letter code: D-alanine aminotransferase (282 aa).

Tyr32 provides a ligand contact to substrate. Arg51 contacts pyridoxal 5'-phosphate. Residues Arg99 and His101 each coordinate substrate. Lys146 (proton acceptor) is an active-site residue. Position 146 is an N6-(pyridoxal phosphate)lysine (Lys146). Glu178 provides a ligand contact to pyridoxal 5'-phosphate.

The protein belongs to the class-IV pyridoxal-phosphate-dependent aminotransferase family. As to quaternary structure, homodimer. Pyridoxal 5'-phosphate serves as cofactor.

It catalyses the reaction D-alanine + 2-oxoglutarate = D-glutamate + pyruvate. Acts on the D-isomers of alanine, leucine, aspartate, glutamate, aminobutyrate, norvaline and asparagine. The enzyme transfers an amino group from a substrate D-amino acid to the pyridoxal phosphate cofactor to form pyridoxamine and an alpha-keto acid in the first half-reaction. The second half-reaction is the reverse of the first, transferring the amino group from the pyridoxamine to a second alpha-keto acid to form the product D-amino acid via a ping-pong mechanism. This is an important process in the formation of D-alanine and D-glutamate, which are essential bacterial cell wall components. The polypeptide is D-alanine aminotransferase (dat) (Staphylococcus aureus (strain N315)).